The primary structure comprises 610 residues: Sodium-coupled monocarboxylate transporter 1 (610 aa).

Residues 1 to 9 (MDTPRGIGT) are Extracellular-facing. Residues 10–30 (FVVWDYVVFAGMLVISAAIGI) form a helical membrane-spanning segment. Topologically, residues 31-51 (YYAFAGGGQQTSKDFLMGGRR) are cytoplasmic. A helical transmembrane segment spans residues 52–72 (MTAVPVALSLTASFMSAVTVL). Over 73 to 83 (GTPSEVYRFGA) the chain is Extracellular. Residues 84–104 (IFSIFAFTYFFVVVISAEVFL) traverse the membrane as a helical segment. Residues 105–132 (PVFYKLGITSTYEYLELRFNKCVRLCGT) lie on the Cytoplasmic side of the membrane. The chain crosses the membrane as a helical span at residues 133–153 (VLFIVQTILYTGIVIYAPALA). At 154–161 (LNQVTGFD) the chain is on the extracellular side. A helical transmembrane segment spans residues 162-182 (LWGAVVATGVVCTFYCTLGGL). The Cytoplasmic segment spans residues 183–189 (KAVIWTD). Residues 190-210 (VFQVGIMVAGFASVIIQAVVM) traverse the membrane as a helical segment. The Extracellular segment spans residues 211–239 (QGGISTILNDAYDGGRLNFWNFNPNPLQR). The helical transmembrane segment at 240–260 (HTFWTIIIGGTFTWTSIYGVN) threads the bilayer. The Cytoplasmic segment spans residues 261–279 (QSQVQRYISCKSRFQAKLS). Residues 280–300 (LYINLVGLWAILTCSVFCGLA) form a helical membrane-spanning segment. At 301-336 (LYSRYHDCDPWTAKKVSAPDQLMPYLVLDILQDYPG) the chain is on the extracellular side. Residues 337–359 (LPGLFVACAYSGTLSTVSSSINA) form a helical membrane-spanning segment. Over 360–389 (LAAVTVEDLIKPYFRSLSERSLSWISQGMS) the chain is Cytoplasmic. Residues 390–410 (VVYGALCIGMAALASLMGALL) form a helical membrane-spanning segment. Residues 411–415 (QAALS) are Extracellular-facing. Residues 416 to 436 (VFGMVGGPLMGLFALGILVPF) traverse the membrane as a helical segment. Topologically, residues 437–439 (ANS) are cytoplasmic. A helical transmembrane segment spans residues 440–460 (IGALVGLMAGFAISLWVGIGA). The Extracellular portion of the chain corresponds to 461-518 (QIYPPLPERTLPLHLDIQGCNSTYNETNLMTTTEMPFTTSVFQIYNVQRTPLMDNWYS). Asn-485 carries N-linked (GlcNAc...) asparagine glycosylation. Residues 519-539 (LSYLYFSTVGTLVTLLVGILV) traverse the membrane as a helical segment. Residues 540–610 (SLSTGGRKQN…QSGKSNGTRL (71 aa)) lie on the Cytoplasmic side of the membrane. Residues 585-610 (GGTDNPAFNHIELNSDQSGKSNGTRL) form a disordered region. A compositionally biased stretch (polar residues) spans 596 to 610 (ELNSDQSGKSNGTRL). The PDZ-binding signature appears at 608–610 (TRL).

The protein belongs to the sodium:solute symporter (SSF) (TC 2.A.21) family. Interacts (via PDZ-binding motif) with PDZK1 (via PDZ domains 1 and 3); interaction increases nicotinate transport activity of SLC5A8. As to expression, expressed in normal thyroid, localized at the apical pole of thyroid cells facing the colloid lumen, but expression profoundly decreased in thyroid carcinomas. Expressed in normal colon but absent in colon aberrant crypt foci and colon cancers. Present in normal kidney cortex, brain, prostate, gastric mucosa and breast tissue but was significantly down-regulated in primary gliomas, gastric cancer, prostate tumors and breast tumors.

Its subcellular location is the apical cell membrane. The enzyme catalyses (S)-lactate(out) + 2 Na(+)(out) = (S)-lactate(in) + 2 Na(+)(in). The catalysed reaction is propanoate(out) + 2 Na(+)(out) = propanoate(in) + 2 Na(+)(in). It carries out the reaction pyruvate(out) + 2 Na(+)(out) = pyruvate(in) + 2 Na(+)(in). It catalyses the reaction acetate(out) + 2 Na(+)(out) = acetate(in) + 2 Na(+)(in). The enzyme catalyses butanoate(out) + 2 Na(+)(out) = butanoate(in) + 2 Na(+)(in). The catalysed reaction is nicotinate(out) + 2 Na(+)(out) = nicotinate(in) + 2 Na(+)(in). It carries out the reaction (R)-3-hydroxybutanoate(out) + 2 Na(+)(out) = (R)-3-hydroxybutanoate(in) + 2 Na(+)(in). It catalyses the reaction acetoacetate(out) + 2 Na(+)(out) = acetoacetate(in) + 2 Na(+)(in). The enzyme catalyses 4-methyl-2-oxopentanoate(out) + 2 Na(+)(out) = 4-methyl-2-oxopentanoate(in) + 2 Na(+)(in). The catalysed reaction is 5-oxo-L-proline(out) + 2 Na(+)(out) = 5-oxo-L-proline(in) + 2 Na(+)(in). It carries out the reaction iodide(out) = iodide(in). It catalyses the reaction chloride(in) = chloride(out). The enzyme catalyses nitrate(in) = nitrate(out). The catalysed reaction is bromide(in) = bromide(out). Its activity is regulated as follows. Increase of iodide influx inhibited by addition of perchlorate (NaClO(4)), a competitive inhibitor of iodide uptake catalyzed by sodium iodide symporter (NIS). Cotransport of monocarboxylates and nicotinate strongly inhibited by probenecid, nonsteroid anti-inflammatory drugs (ibuprofen, fenoprofen, ketprofen, naproxen) in a Na(+)-dependent manner or by prolonged exposure to external concentrations of monocarboxylates. Its function is as follows. Acts as an electrogenic sodium (Na(+)) and chloride (Cl-)-dependent sodium-coupled solute transporter, including transport of monocarboxylates (short-chain fatty acids including L-lactate, D-lactate, pyruvate, acetate, propionate, valerate and butyrate), mocarboxylate drugs (nicotinate, benzoate, salicylate and 5-aminosalicylate) and ketone bodies (beta-D-hydroxybutyrate, acetoacetate and alpha-ketoisocaproate), with a Na(+):substrate stoichiometry of between 4:1 and 2:1. Catalyzes passive carrier mediated diffusion of iodide. Mediates iodide transport from the thyrocyte into the colloid lumen through the apical membrane. May be responsible for the absorption of D-lactate and monocarboxylate drugs from the intestinal tract. Acts as a tumor suppressor, suppressing colony formation in colon cancer, prostate cancer and glioma cell lines. May play a critical role in the entry of L-lactate and ketone bodies into neurons by a process driven by an electrochemical Na(+) gradient and hence contribute to the maintenance of the energy status and function of neurons. Mediates sodium-coupled electrogenic transport of pyroglutamate (5-oxo-L-proline). Can mediate the transport of chloride, bromide, iodide and nitrate ions when the external concentration of sodium ions is reduced. The protein is Sodium-coupled monocarboxylate transporter 1 of Homo sapiens (Human).